The chain runs to 193 residues: N-(5'-phosphoribosyl)anthranilate isomerase (193 aa).

Belongs to the TrpF family.

It carries out the reaction N-(5-phospho-beta-D-ribosyl)anthranilate = 1-(2-carboxyphenylamino)-1-deoxy-D-ribulose 5-phosphate. The protein operates within amino-acid biosynthesis; L-tryptophan biosynthesis; L-tryptophan from chorismate: step 3/5. The polypeptide is N-(5'-phosphoribosyl)anthranilate isomerase (Streptococcus mutans serotype c (strain ATCC 700610 / UA159)).